We begin with the raw amino-acid sequence, 177 residues long: R-phycoerythrin beta chain (177 aa).

2 residues coordinate phycourobilin: cysteine 50 and cysteine 61. Asparagine 72 is subject to N4-methylasparagine. (2R,3E)-phycoerythrobilin contacts are provided by cysteine 82 and cysteine 158.

This sequence belongs to the phycobiliprotein family. In terms of assembly, heterodimer of an alpha and a beta chain. Post-translationally, contains two covalently linked phycoerythrobilin chromophores and one covalently linked phycourobilin chromophore.

The protein resides in the plastid. It localises to the chloroplast thylakoid membrane. In terms of biological role, light-harvesting photosynthetic bile pigment-protein from the phycobiliprotein complex. This Lophosiphonia boldii (Red alga) protein is R-phycoerythrin beta chain (cpeB).